Consider the following 279-residue polypeptide: Phage-like element PBSX protein XepA (279 aa).

This sequence to B.subtilis YqxG/YqdC.

Not known; does not seem to be involved in host cell lysis. The polypeptide is Phage-like element PBSX protein XepA (xepA) (Bacillus subtilis (strain 168)).